Here is a 290-residue protein sequence, read N- to C-terminus: Polyamine aminopropyltransferase (290 aa).

The 234-residue stretch at 5–238 (QLWYEKLHSS…GIMTFAWASE (234 aa)) folds into the PABS domain. Gln33 is an S-methyl-5'-thioadenosine binding site. Spermidine contacts are provided by His64 and Asp88. S-methyl-5'-thioadenosine is bound by residues Glu108 and 140 to 141 (DG). The active-site Proton acceptor is the Asp158. Residue 158–161 (DSTD) coordinates spermidine. An S-methyl-5'-thioadenosine-binding site is contributed by Pro165.

The protein belongs to the spermidine/spermine synthase family. As to quaternary structure, homodimer or homotetramer.

It localises to the cytoplasm. It catalyses the reaction S-adenosyl 3-(methylsulfanyl)propylamine + putrescine = S-methyl-5'-thioadenosine + spermidine + H(+). It participates in amine and polyamine biosynthesis; spermidine biosynthesis; spermidine from putrescine: step 1/1. In terms of biological role, catalyzes the irreversible transfer of a propylamine group from the amino donor S-adenosylmethioninamine (decarboxy-AdoMet) to putrescine (1,4-diaminobutane) to yield spermidine. The chain is Polyamine aminopropyltransferase from Hamiltonella defensa subsp. Acyrthosiphon pisum (strain 5AT).